The primary structure comprises 320 residues: Taste receptor type 2 member 129 (320 aa).

Residues Met-1–Met-8 are Extracellular-facing. Residues Phe-9–Leu-29 traverse the membrane as a helical segment. The Cytoplasmic portion of the chain corresponds to Val-30–Arg-55. A helical membrane pass occupies residues Ile-56 to Leu-76. Topologically, residues Val-77 to His-88 are extracellular. The helical transmembrane segment at Leu-89 to Leu-109 threads the bilayer. Over Lys-110–Gln-128 the chain is Cytoplasmic. Residues Val-129–Asn-149 form a helical membrane-spanning segment. Over Ser-150–Cys-185 the chain is Extracellular. N-linked (GlcNAc...) asparagine glycosylation is present at Asn-170. The chain crosses the membrane as a helical span at residues Ile-186–Leu-206. Residues Trp-207–Gln-233 lie on the Cytoplasmic side of the membrane. The helical transmembrane segment at Thr-234–Leu-254 threads the bilayer. The Extracellular segment spans residues Arg-255–Tyr-264. A helical transmembrane segment spans residues Val-265–Cys-285. Residues Arg-286–Phe-320 are Cytoplasmic-facing.

Belongs to the G-protein coupled receptor T2R family.

The protein localises to the membrane. Its function is as follows. Putative taste receptor which may play a role in the perception of bitterness. In Mus musculus (Mouse), this protein is Taste receptor type 2 member 129.